The following is a 355-amino-acid chain: UDP-3-O-acylglucosamine N-acyltransferase (355 aa).

The Proton acceptor role is filled by His246.

It belongs to the transferase hexapeptide repeat family. LpxD subfamily. Homotrimer.

It carries out the reaction a UDP-3-O-[(3R)-3-hydroxyacyl]-alpha-D-glucosamine + a (3R)-hydroxyacyl-[ACP] = a UDP-2-N,3-O-bis[(3R)-3-hydroxyacyl]-alpha-D-glucosamine + holo-[ACP] + H(+). Its pathway is bacterial outer membrane biogenesis; LPS lipid A biosynthesis. In terms of biological role, catalyzes the N-acylation of UDP-3-O-acylglucosamine using 3-hydroxyacyl-ACP as the acyl donor. Is involved in the biosynthesis of lipid A, a phosphorylated glycolipid that anchors the lipopolysaccharide to the outer membrane of the cell. The polypeptide is UDP-3-O-acylglucosamine N-acyltransferase (Polaromonas naphthalenivorans (strain CJ2)).